A 174-amino-acid chain; its full sequence is RNA pyrophosphohydrolase (174 aa).

Positions 6–149 (GYRPNVGIIL…KRDVYERALS (144 aa)) constitute a Nudix hydrolase domain. The short motif at 38–59 (GGIKPGESPEAAMYRELLEEVG) is the Nudix box element.

It belongs to the Nudix hydrolase family. RppH subfamily. A divalent metal cation is required as a cofactor.

In terms of biological role, accelerates the degradation of transcripts by removing pyrophosphate from the 5'-end of triphosphorylated RNA, leading to a more labile monophosphorylated state that can stimulate subsequent ribonuclease cleavage. This is RNA pyrophosphohydrolase from Chromobacterium violaceum (strain ATCC 12472 / DSM 30191 / JCM 1249 / CCUG 213 / NBRC 12614 / NCIMB 9131 / NCTC 9757 / MK).